The primary structure comprises 440 residues: Protein FPV117 (440 aa).

This sequence belongs to the poxviruses G5 family.

The polypeptide is Protein FPV117 (Fowlpox virus (strain NVSL) (FPV)).